The following is a 246-amino-acid chain: MEISLLTDVGQKRTNNQDYVNHYVNRAGRTMIILADGMGGHRAGNIASEMAVTDLGVAWVDTQIDTVNEVREWFAHYLEIENQKIHQLGQDEAYRGMGTTLEVLAIIDNQAIYAHIGDSRIGLIRGEEYHQLTSDHSLVNELLKAGQLTPEEAEAHPQKNIITQSIGQKDEIQPDFGTVILESGDYLLLNSDGLTNMISGSEIRDIVTSDIPLADKTETLVRFANNAGGLDNITVALVSMNEEDAE.

The region spanning 2–240 is the PPM-type phosphatase domain; sequence EISLLTDVGQ…DNITVALVSM (239 aa). Mn(2+) is bound by residues aspartate 36, glycine 37, aspartate 192, and aspartate 231.

This sequence belongs to the PP2C family. The cofactor is Mn(2+).

It localises to the cytoplasm. It catalyses the reaction O-phospho-L-seryl-[protein] + H2O = L-seryl-[protein] + phosphate. The catalysed reaction is O-phospho-L-threonyl-[protein] + H2O = L-threonyl-[protein] + phosphate. Protein phosphatase able to dephosphorylate StkP-P and other phosphorylated protein substrates. PhpP and its cognate protein kinase StkP appear to constitute a functional signaling couple in vivo, PhpP's primary role being probably to control phosphorylation levels of StkP and of its targets. PhpP thus performs an essential control of StkP activity. Also dephosphorylates DivIVA in vivo. This Streptococcus pneumoniae serotype 2 (strain D39 / NCTC 7466) protein is Protein phosphatase PhpP (phpP).